We begin with the raw amino-acid sequence, 773 residues long: Histone-lysine N-methyltransferase mes-2 (773 aa).

A compositionally biased stretch (polar residues) spans 1 to 13 (MSNSEPSTSTPSG). The disordered stretch occupies residues 1 to 33 (MSNSEPSTSTPSGKTKKRGKKCETSMGKSKKSK). The interaction with mes-6 stretch occupies residues 1–194 (MSNSEPSTST…TPDQLRLTHM (194 aa)). One can recognise a CXC domain in the interval 505 to 614 (IREDDMRDSQ…SNIIKCRNFG (110 aa)). An SET domain is found at 616-737 (TRMIQKRTYC…ISEELTFDYS (122 aa)). Residues 749–773 (VQTKERSEKPSRPKSQKLSKPMTSE) are disordered. Residues 750–759 (QTKERSEKPS) are compositionally biased toward basic and acidic residues.

Belongs to the class V-like SAM-binding methyltransferase superfamily. Histone-lysine methyltransferase family. EZ subfamily. As to quaternary structure, interacts directly with mes-6 via its N-terminal domain. Forms a heterotrimeric complex with mes-3 and mes-6. Does not interact with mes-4. In terms of tissue distribution, in adults, it is predominantly expressed in the germline, and weakly expressed in intestinal cells. Expressed in the hypoderm.

Its subcellular location is the nucleus. It carries out the reaction L-lysyl(27)-[histone H3] + 3 S-adenosyl-L-methionine = N(6),N(6),N(6)-trimethyl-L-lysyl(27)-[histone H3] + 3 S-adenosyl-L-homocysteine + 3 H(+). Polycomb group (PcG) protein. Catalytic subunit of a the mes-2/mes-3/mes-6 complex, which methylates 'Lys-27' of histone H3, leading to transcriptional repression of the affected target genes. PcG proteins act by forming multiprotein complexes, which are required to maintain the transcriptionally repressive state of homeotic genes throughout development. In association with the nfya-1-NF-Y complex, may play a role in repressing the expression of the homeobox protein egl-5 in tissues such as the head. PcG proteins are not required to initiate repression, but to maintain it during later stages of development. The mes-2/mes-3/mes-6 complex may participate in the global inactivation of the X chromosomes in germline cells. This complex is required to exclude mes-4 from the inactivated X-chromosomes in germline cells. Required for small-RNA-induced H3K27 trimethylation. Involved in the negative regulation of lifespan in a germline-independent fashion. This is Histone-lysine N-methyltransferase mes-2 from Caenorhabditis elegans.